Reading from the N-terminus, the 337-residue chain is G-protein coupled receptor 26 (337 aa).

At 1–10 (MNSWDAGLAG) the chain is on the extracellular side. A helical transmembrane segment spans residues 11-31 (LLVGTMGVSLLSNALVLLCLL). Residues 32-47 (HSADIRRQAPALFTLN) lie on the Cytoplasmic side of the membrane. The chain crosses the membrane as a helical span at residues 48–68 (LTCGNLLCTVVNMPLTLAGVV). The Extracellular portion of the chain corresponds to 69 to 81 (AQRQPAGDRLCRL). Cys-79 and Cys-156 are joined by a disulfide. A helical transmembrane segment spans residues 82 to 102 (AAFLDTFLAANSMLSMAALSI). Over 103-123 (DRWVAVVFPLSYRAKMRLRDA) the chain is Cytoplasmic. A helical membrane pass occupies residues 124-144 (ALMVAYTWLHALTFPAAALAL). Residues 145 to 168 (SWLGFHQLYASCTLCSRRPDERLR) are Extracellular-facing. A helical transmembrane segment spans residues 169–189 (FAVFTGAFHALSFLLSFVVLC). Over 190–245 (CTYLKVLKVARFHCKRIDVITMQTLVLLVDLHPSVRERCLEEQKRRRQRATKKIST) the chain is Cytoplasmic. A helical membrane pass occupies residues 246 to 266 (FIGTFLVCFAPYVITRLVELF). The Extracellular segment spans residues 267-276 (STVPIGSHWG). A helical membrane pass occupies residues 277 to 297 (VLSKCLAYSKAASDPFVYSLL). At 298–337 (RHQYRKSCKEILNRLLHRRSIHSSGLTGDSHSQNILPVSE) the chain is on the cytoplasmic side.

The protein belongs to the G-protein coupled receptor 1 family. In terms of tissue distribution, highly expressed in the CNS, the highest expression is seen in the amygdala, hippocampus and thalamus. Weak expression is detected in testis. Down-regulated in glioblastoma.

Its subcellular location is the cell membrane. Functionally, orphan receptor. Displays a significant level of constitutive activity. Its effect is mediated by G(s)-alpha protein that stimulate adenylate cyclase, resulting in an elevation of intracellular cAMP. This Homo sapiens (Human) protein is G-protein coupled receptor 26 (GPR26).